A 516-amino-acid polypeptide reads, in one-letter code: Putative glucosylceramidase 2 (516 aa).

Residues 1-23 form the signal peptide; that stretch reads MSIAWSCFVLGLFALASLQVALA. The active-site Proton donor is the Glu-254. Glu-358 serves as the catalytic Nucleophile.

It belongs to the glycosyl hydrolase 30 family.

The catalysed reaction is a beta-D-glucosylceramide + H2O = an N-acyl-sphingoid base + D-glucose. It carries out the reaction a beta-D-glucosyl-(1&lt;-&gt;1')-N-acylsphing-4-enine + H2O = an N-acylsphing-4-enine + D-glucose. It catalyses the reaction an N-acyl-1-beta-D-glucosyl-15-methylhexadecasphing-4-enine + H2O = an N-acyl-15-methylhexadecasphing-4-enine + D-glucose. Its pathway is lipid metabolism; sphingolipid metabolism. In terms of biological role, glucosylceramidase that catalyzes the hydrolysis of glucosylceramides into free ceramides and glucose. C.elegans contain specific sphingoid bases, which are unique or different in structure compared to the sphingoid bases found in other animals. Two examples of these distinctive compounds are: 15-methylhexadecasphinganine and 15-methylhexadecasphing-4-enine. This chain is Putative glucosylceramidase 2 (gba-2), found in Caenorhabditis elegans.